Here is a 44-residue protein sequence, read N- to C-terminus: Photosystem II reaction center protein J (44 aa).

The helical transmembrane segment at 12-32 threads the bilayer; that stretch reads IPLWIVGFVVGSLALGLLGIL.

Belongs to the PsbJ family. In terms of assembly, PSII is composed of 1 copy each of membrane proteins PsbA, PsbB, PsbC, PsbD, PsbE, PsbF, PsbH, PsbI, PsbJ, PsbK, PsbL, PsbM, PsbT, PsbY, PsbZ, Psb30/Ycf12, at least 3 peripheral proteins of the oxygen-evolving complex and a large number of cofactors. It forms dimeric complexes.

It localises to the plastid. Its subcellular location is the chloroplast thylakoid membrane. In terms of biological role, one of the components of the core complex of photosystem II (PSII). PSII is a light-driven water:plastoquinone oxidoreductase that uses light energy to abstract electrons from H(2)O, generating O(2) and a proton gradient subsequently used for ATP formation. It consists of a core antenna complex that captures photons, and an electron transfer chain that converts photonic excitation into a charge separation. This is Photosystem II reaction center protein J from Bigelowiella natans (Pedinomonas minutissima).